The following is a 401-amino-acid chain: Imidazolonepropionase (401 aa).

The Fe(3+) site is built by H66 and H68. Positions 66 and 68 each coordinate Zn(2+). The 4-imidazolone-5-propanoate site is built by R75, Y138, and H171. An N-formimidoyl-L-glutamate-binding site is contributed by Y138. H236 serves as a coordination point for Fe(3+). Residue H236 participates in Zn(2+) binding. Q239 contacts 4-imidazolone-5-propanoate. Residue D311 participates in Fe(3+) binding. D311 serves as a coordination point for Zn(2+). N-formimidoyl-L-glutamate-binding residues include N313 and G315. T316 lines the 4-imidazolone-5-propanoate pocket.

It belongs to the metallo-dependent hydrolases superfamily. HutI family. Requires Zn(2+) as cofactor. Fe(3+) is required as a cofactor.

It localises to the cytoplasm. The catalysed reaction is 4-imidazolone-5-propanoate + H2O = N-formimidoyl-L-glutamate. It participates in amino-acid degradation; L-histidine degradation into L-glutamate; N-formimidoyl-L-glutamate from L-histidine: step 3/3. Functionally, catalyzes the hydrolytic cleavage of the carbon-nitrogen bond in imidazolone-5-propanoate to yield N-formimidoyl-L-glutamate. It is the third step in the universal histidine degradation pathway. The chain is Imidazolonepropionase from Pseudomonas syringae pv. tomato (strain ATCC BAA-871 / DC3000).